A 194-amino-acid polypeptide reads, in one-letter code: Small ribosomal subunit protein uS4c (194 aa).

The S4 RNA-binding domain maps to 82–143; it reads MRLDNILFRL…KERSKVLIQN (62 aa).

Belongs to the universal ribosomal protein uS4 family. As to quaternary structure, part of the 30S ribosomal subunit. Contacts protein S5. The interaction surface between S4 and S5 is involved in control of translational fidelity.

Its subcellular location is the plastid. It is found in the chloroplast. Functionally, one of the primary rRNA binding proteins, it binds directly to 16S rRNA where it nucleates assembly of the body of the 30S subunit. With S5 and S12 plays an important role in translational accuracy. The polypeptide is Small ribosomal subunit protein uS4c (rps4) (Cypella sp. (strain Porto Alegre 027)).